The sequence spans 121 residues: Large ribosomal subunit protein bL19 (121 aa).

It belongs to the bacterial ribosomal protein bL19 family.

Its function is as follows. This protein is located at the 30S-50S ribosomal subunit interface and may play a role in the structure and function of the aminoacyl-tRNA binding site. This Chlamydia trachomatis serovar L2 (strain ATCC VR-902B / DSM 19102 / 434/Bu) protein is Large ribosomal subunit protein bL19.